Reading from the N-terminus, the 631-residue chain is Phosphomethylpyrimidine synthase (631 aa).

Substrate contacts are provided by residues N239, M268, Y297, H333, 353–355 (SRG), 394–397 (DGLR), and E433. H437 is a Zn(2+) binding site. Y460 provides a ligand contact to substrate. H501 is a binding site for Zn(2+). [4Fe-4S] cluster-binding residues include C581, C584, and C589.

The protein belongs to the ThiC family. Homodimer. The cofactor is [4Fe-4S] cluster.

The catalysed reaction is 5-amino-1-(5-phospho-beta-D-ribosyl)imidazole + S-adenosyl-L-methionine = 4-amino-2-methyl-5-(phosphooxymethyl)pyrimidine + CO + 5'-deoxyadenosine + formate + L-methionine + 3 H(+). The protein operates within cofactor biosynthesis; thiamine diphosphate biosynthesis. Its function is as follows. Catalyzes the synthesis of the hydroxymethylpyrimidine phosphate (HMP-P) moiety of thiamine from aminoimidazole ribotide (AIR) in a radical S-adenosyl-L-methionine (SAM)-dependent reaction. The protein is Phosphomethylpyrimidine synthase of Salmonella paratyphi B (strain ATCC BAA-1250 / SPB7).